A 439-amino-acid chain; its full sequence is Signal recognition particle 54 kDa protein (439 aa).

GTP is bound by residues 104-111 (GLQGSGKT), 184-188 (DTAGR), and 242-245 (SKLD).

This sequence belongs to the GTP-binding SRP family. SRP54 subfamily. Part of the signal recognition particle protein translocation system, which is composed of SRP and FtsY. Archaeal SRP consists of a 7S RNA molecule of 300 nucleotides and two protein subunits: SRP54 and SRP19.

The protein localises to the cytoplasm. The catalysed reaction is GTP + H2O = GDP + phosphate + H(+). Functionally, involved in targeting and insertion of nascent membrane proteins into the cytoplasmic membrane. Binds to the hydrophobic signal sequence of the ribosome-nascent chain (RNC) as it emerges from the ribosomes. The SRP-RNC complex is then targeted to the cytoplasmic membrane where it interacts with the SRP receptor FtsY. The chain is Signal recognition particle 54 kDa protein from Methanococcoides burtonii (strain DSM 6242 / NBRC 107633 / OCM 468 / ACE-M).